A 498-amino-acid chain; its full sequence is GPI mannosyltransferase 4 (498 aa).

Residues 11 to 31 form a helical membrane-spanning segment; that stretch reads FYLLTIVFRFVFTLSDSYIHP. Asn-47 is a glycosylation site (N-linked (GlcNAc...) asparagine). Residues 63–83 form a helical membrane-spanning segment; sequence SLAPLYFIYGPLLYFIKFFKL. A glycan (N-linked (GlcNAc...) asparagine) is linked at Asn-84. Transmembrane regions (helical) follow at residues 96-116, 140-160, 189-209, 222-242, 247-267, 282-302, 310-330, 332-348, and 350-370; these read LQISILSWIITDFCLYWMLPS, LFSNSIETLLLLVTILLIDDL, LGIFNRITFPAFLILPGWFVM, LVMGFFSTTALLILVDTILFG, VVAEPFNVSSYIIAPLNNLLY, YYTHILVNMPQILGPGLIFFV, TPFLTVISGLLFLSVIPHQEL, FLIPLLPLACCSFDFTL, and WVQPWMLYTWYIFNIFMSILM. 2 N-linked (GlcNAc...) asparagine glycosylation sites follow: Asn-408 and Asn-473.

It belongs to the glycosyltransferase 22 family. PIGZ subfamily.

The protein localises to the endoplasmic reticulum membrane. It participates in glycolipid biosynthesis; glycosylphosphatidylinositol-anchor biosynthesis. Functionally, alpha-1,2-mannosyltransferase involved in glycosylphosphatidylinositol-anchor biosynthesis. Transfers a fourth mannose to trimannosyl-GPIs during GPI precursor assembly. The presence of a fourth mannose in GPI is essential in fungi. The polypeptide is GPI mannosyltransferase 4 (SMP3) (Candida albicans (strain SC5314 / ATCC MYA-2876) (Yeast)).